A 416-amino-acid chain; its full sequence is Isobutyryl-CoA dehydrogenase, mitochondrial (416 aa).

A mitochondrion-targeting transit peptide spans 1-21; it reads MISGLFKLSNKQSVLQNATKL. FAD contacts are provided by residues 156 to 165 and 189 to 191; these read YCLTEPGSGS and FIS. Ser165 contacts substrate. 273 to 276 provides a ligand contact to substrate; it reads NGGR. FAD-binding positions include Arg301, 311–312, and 370–374; these read FQ and QLFGG. Catalysis depends on Glu397, which acts as the Proton acceptor. Residue 399-401 participates in FAD binding; the sequence is SDA. Arg409 provides a ligand contact to substrate.

It belongs to the acyl-CoA dehydrogenase family. As to quaternary structure, homotetramer. FAD serves as cofactor.

It is found in the mitochondrion. It catalyses the reaction 2-methylpropanoyl-CoA + oxidized [electron-transfer flavoprotein] + H(+) = 2-methylpropenoyl-CoA + reduced [electron-transfer flavoprotein]. The enzyme catalyses (2S)-2-methylbutanoyl-CoA + oxidized [electron-transfer flavoprotein] + H(+) = (2E)-2-methylbut-2-enoyl-CoA + reduced [electron-transfer flavoprotein]. The catalysed reaction is propanoyl-CoA + oxidized [electron-transfer flavoprotein] + H(+) = acryloyl-CoA + reduced [electron-transfer flavoprotein]. It participates in amino-acid degradation; L-valine degradation. Functionally, isobutyryl-CoA dehydrogenase which catalyzes one of the steps of the valine catabolic pathway. To a lesser extent, is also able to catalyze the oxidation of (2S)-2-methylbutanoyl-CoA. This is Isobutyryl-CoA dehydrogenase, mitochondrial (acad8) from Dictyostelium discoideum (Social amoeba).